The chain runs to 113 residues: MTDTHSIAQPFEAEVSPANNRQLTVSYASRYPDYSRIPAITLKGQWLEAAGFATGTAIDVKVMEGCIVLTAQPPAAEESELMQSLRQVCKLSARKQRQVQEFIGVIAGKQKVA.

Residues 29-74 enclose the SpoVT-AbrB domain; sequence SRYPDYSRIPAITLKGQWLEAAGFATGTAIDVKVMEGCIVLTAQPP.

Belongs to the SymE family.

It localises to the cytoplasm. In terms of biological role, involved in the degradation and recycling of damaged RNA. It is itself a target for degradation by the ATP-dependent protease Lon. The polypeptide is Endoribonuclease SymE (Escherichia coli O1:K1 / APEC).